Consider the following 123-residue polypeptide: uncharacterized protein (123 aa).

This is an uncharacterized protein from Methanocaldococcus jannaschii (strain ATCC 43067 / DSM 2661 / JAL-1 / JCM 10045 / NBRC 100440) (Methanococcus jannaschii).